Here is a 294-residue protein sequence, read N- to C-terminus: Survival motor neuron protein (294 aa).

A compositionally biased stretch (gly residues) spans 1–10; it reads MAMSSGGSGS. The disordered stretch occupies residues 1–32; that stretch reads MAMSSGGSGSGVPEQEDAVLFRRGTGQSDDSD. An N-acetylalanine modification is found at A2. S4, S5, and S8 each carry phosphoserine; by PKA. The segment at 13–44 is P1 (binding site for GEMIN2); sequence PEQEDAVLFRRGTGQSDDSDIWDDTALIKAYD. T25 is subject to Phosphothreonine. A phosphoserine mark is found at S28 and S31. A Glycyl lysine isopeptide (Lys-Gly) (interchain with G-Cter in SUMO2) cross-link involves residue K51. The segment at 60-88 is disordered; the sequence is CETSGKSKTTPKRKPAKKNKSQKKNTAAS. Positions 68–82 are enriched in basic residues; it reads TTPKRKPAKKNKSQK. T69 carries the post-translational modification Phosphothreonine. T85 carries the post-translational modification Phosphothreonine; by PKA. A Tudor domain is found at 91–151; that stretch reads QWKVGDKCSA…LSPICEVANN (61 aa). A required for interaction with RPP20/POP7 region spans residues 97-209; it reads KCSAIWSEDG…MPGPRLGPGK (113 aa). Residues 156–166 are compositionally biased toward low complexity; that stretch reads AQENENESQVS. Positions 156–222 are disordered; that stretch reads AQENENESQV…KFNGPPPPPP (67 aa). Residue S187 is modified to Phosphoserine; by PKA. The span at 194–204 shows a compositional bias: pro residues; it reads LPPPPPMPGPR. Over residues 206 to 215 the composition is skewed to low complexity; that stretch reads GPGKPGLKFN. Residue K209 forms a Glycyl lysine isopeptide (Lys-Gly) (interchain with G-Cter in SUMO2) linkage. Residues 240 to 267 are P2 (binding site for SM B); it reads PPIIPPPPPICPDSLDDADALGSMLISW. The required for interaction with SYNCRIP stretch occupies residues 279–294; the sequence is GFRQNQKEGRCSHSLN.

It belongs to the SMN family. In terms of assembly, homooligomer; may form higher order homooligomers in the dimer to octamer range. Part of the core SMN complex that contains SMN1, GEMIN2/SIP1, DDX20/GEMIN3, GEMIN4, GEMIN5, GEMIN6, GEMIN7, GEMIN8 and STRAP/UNRIP. Part of the SMN-Sm complex that contains SMN1, GEMIN2/SIP1, DDX20/GEMIN3, GEMIN4, GEMIN5, GEMIN6, GEMIN7, GEMIN8, STRAP/UNRIP and the Sm proteins SNRPB, SNRPD1, SNRPD2, SNRPD3, SNRPE, SNRPF and SNRPG. Component of an import snRNP complex composed of KPNB1, RNUT1, SMN1 and ZNF259. Interacts with DDX20, FBL, NOLA1, RNUT1, SYNCRIP and with several spliceosomal snRNP core Sm proteins, including SNRPB, SNRPD1, SNRPD2, SNRPD3, SNRPE and ILF3. Interacts with GEMIN2; the interaction is direct. Interacts with GEMIN3; the interaction is direct. Interacts with GEMIN8; the interaction is direct. Interacts with SNRPB; the interaction is direct. Interacts (via Tudor domain) with SNRPD1 (via C-terminus); the interaction is direct. Interacts with SNRPD2; the interaction is direct. Interacts (via Tudor domain) with SNRPD3 (via C-terminus); the interaction is direct. Interacts with SNRPE; the interaction is direct. Interacts with OSTF1, LSM10, LSM11 and RPP20/POP7. Interacts (via C-terminal region) with ZPR1 (via C-terminal region). Interacts (via Tudor domain) with COIL. Interacts with SETX; recruits SETX to POLR2A. Interacts with POLR2A (via the C-terminal domain (CTD)). Interacts with PRMT5. Interacts with XRN2. Interacts (via C-terminus) with FMR1 (via C-terminus); the interaction is direct and occurs in a RNA-independent manner. Interacts (via Tudor domain) with SF3B2 ('Arg-508'-methylated form). Interacts with WRAP53/TCAB1. Interacts (via Tudor domain) with ELAVL4 in an RNA-independent manner; the interaction is required for localization of ELAVL4 to RNA granules. Interacts with FRG1.

It is found in the nucleus. It localises to the gem. The protein resides in the cajal body. The protein localises to the cytoplasm. Its subcellular location is the cytoplasmic granule. It is found in the perikaryon. It localises to the cell projection. The protein resides in the neuron projection. The protein localises to the axon. Its subcellular location is the myofibril. It is found in the sarcomere. It localises to the z line. Functionally, the SMN complex catalyzes the assembly of small nuclear ribonucleoproteins (snRNPs), the building blocks of the spliceosome, and thereby plays an important role in the splicing of cellular pre-mRNAs. Most spliceosomal snRNPs contain a common set of Sm proteins SNRPB, SNRPD1, SNRPD2, SNRPD3, SNRPE, SNRPF and SNRPG that assemble in a heptameric protein ring on the Sm site of the small nuclear RNA to form the core snRNP (Sm core). In the cytosol, the Sm proteins SNRPD1, SNRPD2, SNRPE, SNRPF and SNRPG are trapped in an inactive 6S pICln-Sm complex by the chaperone CLNS1A that controls the assembly of the core snRNP. To assemble core snRNPs, the SMN complex accepts the trapped 5Sm proteins from CLNS1A forming an intermediate. Binding of snRNA inside 5Sm ultimately triggers eviction of the SMN complex, thereby allowing binding of SNRPD3 and SNRPB to complete assembly of the core snRNP. Within the SMN complex, SMN1 acts as a structural backbone and together with GEMIN2 it gathers the Sm complex subunits. Ensures the correct splicing of U12 intron-containing genes that may be important for normal motor and proprioceptive neurons development. Also required for resolving RNA-DNA hybrids created by RNA polymerase II, that form R-loop in transcription terminal regions, an important step in proper transcription termination. May also play a role in the metabolism of small nucleolar ribonucleoprotein (snoRNPs). This Pongo abelii (Sumatran orangutan) protein is Survival motor neuron protein (SMN1).